The primary structure comprises 529 residues: Bifunctional purine biosynthesis protein PurH (529 aa).

Residues 1 to 148 (MNNARPIRRA…KNHKDTTIIV (148 aa)) form the MGS-like domain.

It belongs to the PurH family.

The enzyme catalyses (6R)-10-formyltetrahydrofolate + 5-amino-1-(5-phospho-beta-D-ribosyl)imidazole-4-carboxamide = 5-formamido-1-(5-phospho-D-ribosyl)imidazole-4-carboxamide + (6S)-5,6,7,8-tetrahydrofolate. It carries out the reaction IMP + H2O = 5-formamido-1-(5-phospho-D-ribosyl)imidazole-4-carboxamide. The protein operates within purine metabolism; IMP biosynthesis via de novo pathway; 5-formamido-1-(5-phospho-D-ribosyl)imidazole-4-carboxamide from 5-amino-1-(5-phospho-D-ribosyl)imidazole-4-carboxamide (10-formyl THF route): step 1/1. It functions in the pathway purine metabolism; IMP biosynthesis via de novo pathway; IMP from 5-formamido-1-(5-phospho-D-ribosyl)imidazole-4-carboxamide: step 1/1. The sequence is that of Bifunctional purine biosynthesis protein PurH from Shewanella halifaxensis (strain HAW-EB4).